Here is a 170-residue protein sequence, read N- to C-terminus: Adenine phosphoribosyltransferase (170 aa).

The protein belongs to the purine/pyrimidine phosphoribosyltransferase family. Homodimer.

The protein localises to the cytoplasm. It carries out the reaction AMP + diphosphate = 5-phospho-alpha-D-ribose 1-diphosphate + adenine. It participates in purine metabolism; AMP biosynthesis via salvage pathway; AMP from adenine: step 1/1. Functionally, catalyzes a salvage reaction resulting in the formation of AMP, that is energically less costly than de novo synthesis. The sequence is that of Adenine phosphoribosyltransferase from Brevibacillus brevis (strain 47 / JCM 6285 / NBRC 100599).